Reading from the N-terminus, the 546-residue chain is Glutamate--tRNA ligase (546 aa).

The 'HIGH' region motif lies at 42–52 (PSPTGFIHLGN). The short motif at 293 to 297 (KLSKR) is the 'KMSKS' region element. K296 is an ATP binding site.

It belongs to the class-I aminoacyl-tRNA synthetase family. Glutamate--tRNA ligase type 1 subfamily. In terms of assembly, monomer.

It localises to the cytoplasm. It carries out the reaction tRNA(Glu) + L-glutamate + ATP = L-glutamyl-tRNA(Glu) + AMP + diphosphate. Catalyzes the attachment of glutamate to tRNA(Glu) in a two-step reaction: glutamate is first activated by ATP to form Glu-AMP and then transferred to the acceptor end of tRNA(Glu). This is Glutamate--tRNA ligase from Acetivibrio thermocellus (strain ATCC 27405 / DSM 1237 / JCM 9322 / NBRC 103400 / NCIMB 10682 / NRRL B-4536 / VPI 7372) (Clostridium thermocellum).